The sequence spans 412 residues: Proline-rich protein 30 (412 aa).

Polar residues-rich tracts occupy residues 1 to 15 (MLPQNKDQVLPQTSV) and 23 to 39 (GFSQLVDSSPHNLQPLS). Disordered stretches follow at residues 1 to 88 (MLPQ…HPYS), 123 to 174 (PLTP…SNRQ), and 317 to 412 (RPKE…KSSV). 3 stretches are compositionally biased toward low complexity: residues 50–59 (PFSSTQSRRP), 126–142 (PSFSPSQPQNSSLPHSP), and 334–350 (QLPASQPPAAQARADPV). Over residues 353–372 (TPSQTRSFRSAGLQSPNSPR) the composition is skewed to polar residues.

This Homo sapiens (Human) protein is Proline-rich protein 30 (PRR30).